The primary structure comprises 980 residues: NACHT, LRR and PYD domains-containing protein 7 (980 aa).

The Pyrin domain occupies 1–93 (MTSPQLEWTL…CKMAKAEMME (93 aa)). Positions 104–123 (ELGDAEEDSELAKPGEKEGW) are disordered. The span at 113–123 (ELAKPGEKEGW) shows a compositional bias: basic and acidic residues. The NACHT domain occupies 172–491 (YTVVLHGPAG…LEKEEGEDRD (320 aa)). ATP is bound at residue 178-185 (GPAGVGKT). 9 LRR repeats span residues 614 to 638 (CQDL…DFEL), 674 to 697 (NSNL…ILCD), 760 to 784 (KCNL…FFYV), 788 to 810 (NQSL…MLLY), 817 to 840 (KHFL…DLAA), 845 to 868 (SKKL…FLCE), 874 to 897 (DCKL…YLSE), 902 to 928 (ACSL…ALEN), and 933 to 957 (LKHL…VKEK).

Belongs to the NLRP family. As to quaternary structure, directly interacts with CASP1 and IL1B. Expressed in numerous tissues including uterus and ovary, with low levels in heart and brain. Not detected in skeletal muscle.

Its function is as follows. Inhibits CASP1/caspase-1-dependent IL1B secretion. This chain is NACHT, LRR and PYD domains-containing protein 7 (NLRP7), found in Homo sapiens (Human).